The primary structure comprises 451 residues: MRLDEIKNLNFLVMGLGLNGGGVALSRFLLKHGAKLVITDLKSEAELALSIDSLRDFDDQIRYVLGKHDVNDFKKADIVVKNPSVRPNNKYLKLAKRVETDISLFLIFNKNPIIAVTGTKGKSTLVSLLYQALKKKYPRVKLGGNIGVSPLSFFDQLDGKSPLILELSSWQLQSLENFNPILSIITNVYNDHQNYYSNFDDYIIDKSKIFVNQTSGIVIIQDKAYYKYFSKFESKAKVILFSEFNPCNLDQDIFYSNKGEVYFNDNLIGSFFESQVVFMIPKLIAFFVAYYLNIDLNHMFQILKNFKGIEHRLEFVKLVRNVMFYNDTASTIPDSTVLSVKSLKTNDNCINLIVGGTDKNLDFSSFSKIINLVKAWILIKGSATVKIINVLEKSSIQYFVFDSLRGAVNYAFEISSPGDIVLFSPASASFELFNNEFDRGLQFKKLVDMLG.

Position 118–124 (118–124 (GTKGKST)) interacts with ATP.

Belongs to the MurCDEF family.

It localises to the cytoplasm. It carries out the reaction UDP-N-acetyl-alpha-D-muramoyl-L-alanine + D-glutamate + ATP = UDP-N-acetyl-alpha-D-muramoyl-L-alanyl-D-glutamate + ADP + phosphate + H(+). It functions in the pathway cell wall biogenesis; peptidoglycan biosynthesis. Cell wall formation. Catalyzes the addition of glutamate to the nucleotide precursor UDP-N-acetylmuramoyl-L-alanine (UMA). This chain is UDP-N-acetylmuramoylalanine--D-glutamate ligase, found in Borreliella afzelii (strain PKo) (Borrelia afzelii).